Here is a 61-residue protein sequence, read N- to C-terminus: Large ribosomal subunit protein uL30 (61 aa).

This sequence belongs to the universal ribosomal protein uL30 family. As to quaternary structure, part of the 50S ribosomal subunit.

The polypeptide is Large ribosomal subunit protein uL30 (Treponema pallidum subsp. pallidum (strain SS14)).